The following is a 172-amino-acid chain: Sec-independent protein translocase protein TatB (172 aa).

A helical transmembrane segment spans residues 1–21 (MFDIGWSELLVIGVVALIAIG).

The protein belongs to the TatB family. In terms of assembly, the Tat system comprises two distinct complexes: a TatABC complex, containing multiple copies of TatA, TatB and TatC subunits, and a separate TatA complex, containing only TatA subunits. Substrates initially bind to the TatABC complex, which probably triggers association of the separate TatA complex to form the active translocon.

It localises to the cell inner membrane. Its function is as follows. Part of the twin-arginine translocation (Tat) system that transports large folded proteins containing a characteristic twin-arginine motif in their signal peptide across membranes. Together with TatC, TatB is part of a receptor directly interacting with Tat signal peptides. TatB may form an oligomeric binding site that transiently accommodates folded Tat precursor proteins before their translocation. The sequence is that of Sec-independent protein translocase protein TatB from Rhodopseudomonas palustris (strain BisB18).